The following is a 503-amino-acid chain: ATP synthase subunit alpha (503 aa).

169–176 (GDRKTGKT) is an ATP binding site.

This sequence belongs to the ATPase alpha/beta chains family. F-type ATPases have 2 components, CF(1) - the catalytic core - and CF(0) - the membrane proton channel. CF(1) has five subunits: alpha(3), beta(3), gamma(1), delta(1), epsilon(1). CF(0) has three main subunits: a(1), b(2) and c(9-12). The alpha and beta chains form an alternating ring which encloses part of the gamma chain. CF(1) is attached to CF(0) by a central stalk formed by the gamma and epsilon chains, while a peripheral stalk is formed by the delta and b chains.

Its subcellular location is the cell membrane. The catalysed reaction is ATP + H2O + 4 H(+)(in) = ADP + phosphate + 5 H(+)(out). Functionally, produces ATP from ADP in the presence of a proton gradient across the membrane. The alpha chain is a regulatory subunit. The protein is ATP synthase subunit alpha of Ligilactobacillus salivarius (strain UCC118) (Lactobacillus salivarius).